The primary structure comprises 258 residues: Imidazole glycerol phosphate synthase subunit HisF (258 aa).

Catalysis depends on residues D11 and D130.

This sequence belongs to the HisA/HisF family. Heterodimer of HisH and HisF.

The protein resides in the cytoplasm. The enzyme catalyses 5-[(5-phospho-1-deoxy-D-ribulos-1-ylimino)methylamino]-1-(5-phospho-beta-D-ribosyl)imidazole-4-carboxamide + L-glutamine = D-erythro-1-(imidazol-4-yl)glycerol 3-phosphate + 5-amino-1-(5-phospho-beta-D-ribosyl)imidazole-4-carboxamide + L-glutamate + H(+). The protein operates within amino-acid biosynthesis; L-histidine biosynthesis; L-histidine from 5-phospho-alpha-D-ribose 1-diphosphate: step 5/9. In terms of biological role, IGPS catalyzes the conversion of PRFAR and glutamine to IGP, AICAR and glutamate. The HisF subunit catalyzes the cyclization activity that produces IGP and AICAR from PRFAR using the ammonia provided by the HisH subunit. In Escherichia coli O7:K1 (strain IAI39 / ExPEC), this protein is Imidazole glycerol phosphate synthase subunit HisF.